A 436-amino-acid chain; its full sequence is UPF0597 protein YhaM (436 aa).

Belongs to the UPF0597 family.

The protein is UPF0597 protein YhaM of Shigella dysenteriae serotype 1 (strain Sd197).